The sequence spans 943 residues: Translation initiation factor IF-2 (943 aa).

A disordered region spans residues 46–359; that stretch reads IKGMLSKQSA…MPQRKERPLP (314 aa). A compositionally biased stretch (low complexity) spans 57 to 76; sequence KAPSSQAAKTPAKAAKTSSA. Basic and acidic residues-rich tracts occupy residues 92-103 and 110-124; these read SNDHADVAEHSQ and AKQE…KTSD. Positions 130-141 are enriched in polar residues; sequence SKSTILRPRSTQ. Residues 142 to 190 are compositionally biased toward low complexity; sequence TAHTNTNHNRGGNTASANNTANGRNSNRSNNNNNNRSANNANRSGNNNR. 3 stretches are compositionally biased toward basic and acidic residues: residues 191–205, 239–250, and 259–271; these read SNER…RFDN, ASERQQPKRQEA, and KRSE…RPRT. Low complexity-rich tracts occupy residues 289–299 and 315–330; these read PAAAAPKPASA and NFGR…GFNR. Residues 331–342 are compositionally biased toward basic residues; the sequence is NNRRNKKNKRRQ. Residues 346–358 show a composition bias toward basic and acidic residues; it reads PKKEMPQRKERPL. The tr-type G domain occupies 444–613; it reads PRPPVVTIMG…LLEADVLELK (170 aa). The G1 stretch occupies residues 453-460; sequence GHVDHGKT. 453–460 contacts GTP; the sequence is GHVDHGKT. The tract at residues 478-482 is G2; sequence GITQH. The G3 stretch occupies residues 499–502; it reads DTPG. GTP-binding positions include 499 to 503 and 553 to 556; these read DTPGH and NKID. The G4 stretch occupies residues 553–556; the sequence is NKID. The segment at 589-591 is G5; that stretch reads SAK.

It belongs to the TRAFAC class translation factor GTPase superfamily. Classic translation factor GTPase family. IF-2 subfamily.

Its subcellular location is the cytoplasm. Functionally, one of the essential components for the initiation of protein synthesis. Protects formylmethionyl-tRNA from spontaneous hydrolysis and promotes its binding to the 30S ribosomal subunits. Also involved in the hydrolysis of GTP during the formation of the 70S ribosomal complex. The chain is Translation initiation factor IF-2 from Lacticaseibacillus casei (strain BL23) (Lactobacillus casei).